We begin with the raw amino-acid sequence, 196 residues long: ATP-dependent Clp protease proteolytic subunit 1 (196 aa).

The active-site Nucleophile is the Ser-96. His-121 is an active-site residue.

This sequence belongs to the peptidase S14 family. In terms of assembly, fourteen ClpP subunits assemble into 2 heptameric rings which stack back to back to give a disk-like structure with a central cavity, resembling the structure of eukaryotic proteasomes.

Its subcellular location is the cytoplasm. It catalyses the reaction Hydrolysis of proteins to small peptides in the presence of ATP and magnesium. alpha-casein is the usual test substrate. In the absence of ATP, only oligopeptides shorter than five residues are hydrolyzed (such as succinyl-Leu-Tyr-|-NHMec, and Leu-Tyr-Leu-|-Tyr-Trp, in which cleavage of the -Tyr-|-Leu- and -Tyr-|-Trp bonds also occurs).. Cleaves peptides in various proteins in a process that requires ATP hydrolysis. Has a chymotrypsin-like activity. Plays a major role in the degradation of misfolded proteins. This chain is ATP-dependent Clp protease proteolytic subunit 1, found in Prochlorococcus marinus (strain NATL2A).